The following is a 456-amino-acid chain: Methylenetetrahydrofolate--tRNA-(uracil-5-)-methyltransferase TrmFO (456 aa).

Position 11-16 (11-16) interacts with FAD; the sequence is GGGLAG.

Belongs to the MnmG family. TrmFO subfamily. The cofactor is FAD.

The protein localises to the cytoplasm. The catalysed reaction is uridine(54) in tRNA + (6R)-5,10-methylene-5,6,7,8-tetrahydrofolate + NADH + H(+) = 5-methyluridine(54) in tRNA + (6S)-5,6,7,8-tetrahydrofolate + NAD(+). The enzyme catalyses uridine(54) in tRNA + (6R)-5,10-methylene-5,6,7,8-tetrahydrofolate + NADPH + H(+) = 5-methyluridine(54) in tRNA + (6S)-5,6,7,8-tetrahydrofolate + NADP(+). Functionally, catalyzes the folate-dependent formation of 5-methyl-uridine at position 54 (M-5-U54) in all tRNAs. This is Methylenetetrahydrofolate--tRNA-(uracil-5-)-methyltransferase TrmFO from Synechocystis sp. (strain ATCC 27184 / PCC 6803 / Kazusa).